The chain runs to 1464 residues: DNA polymerase III PolC-type (1464 aa).

The 157-residue stretch at 426 to 582 (YVVFDVETTG…YDAEATGRLL (157 aa)) folds into the Exonuclease domain.

Belongs to the DNA polymerase type-C family. PolC subfamily.

The protein resides in the cytoplasm. It carries out the reaction DNA(n) + a 2'-deoxyribonucleoside 5'-triphosphate = DNA(n+1) + diphosphate. Its function is as follows. Required for replicative DNA synthesis. This DNA polymerase also exhibits 3' to 5' exonuclease activity. In Streptococcus thermophilus (strain ATCC BAA-250 / LMG 18311), this protein is DNA polymerase III PolC-type.